The sequence spans 509 residues: Zinc finger CCCH-type with G patch domain-containing protein (509 aa).

A disordered region spans residues 41–61 (TRGSEPEATSDTKTPETSDNI). A compositionally biased stretch (polar residues) spans 47–58 (EATSDTKTPETS). A C3H1-type zinc finger spans residues 155–178 (PCNYFLEGECRFDEVRCRYSHGAL). The segment at 254-278 (DDDLTSESEESNETDGSDAGNDSDM) is disordered. In terms of domain architecture, G-patch spans 310-356 (TRGIGSKLMANMGYIHGTGLGSDGRGIVTPVSAQILPQGRSLDACME). Positions 410–433 (GSQQTENANKKTKPNNLQQHSNKT) are disordered. A compositionally biased stretch (polar residues) spans 423–433 (PNNLQQHSNKT).

The protein localises to the nucleus. Functionally, transcription repressor. This chain is Zinc finger CCCH-type with G patch domain-containing protein, found in Drosophila mojavensis (Fruit fly).